We begin with the raw amino-acid sequence, 60 residues long: Metallothionein (60 aa).

A beta region spans residues 1 to 28; sequence MDPCECSKGGTCNCGGSCTCTNCSCTTC. A divalent metal cation-binding residues include cysteine 4, cysteine 6, cysteine 12, cysteine 14, cysteine 18, cysteine 20, cysteine 23, cysteine 25, cysteine 28, cysteine 32, cysteine 33, cysteine 35, cysteine 36, cysteine 40, cysteine 43, cysteine 47, cysteine 49, cysteine 54, cysteine 58, and cysteine 59. Residues 29-60 form an alpha region; the sequence is KKSCCPCCPSGCPKCASGCVCKGKTCDAACCQ.

Belongs to the metallothionein superfamily. Type 1 family.

In terms of biological role, metallothioneins have a high content of cysteine residues that bind various heavy metals. The protein is Metallothionein (mt) of Perca fluviatilis (European perch).